Here is a 154-residue protein sequence, read N- to C-terminus: Superoxide dismutase [Cu-Zn] (154 aa).

His-45, His-47, and His-62 together coordinate Cu cation. Residues Cys-56 and Cys-146 are joined by a disulfide bond. Zn(2+) contacts are provided by His-62, His-70, His-79, and Asp-82. Cu cation is bound at residue His-120.

This sequence belongs to the Cu-Zn superoxide dismutase family. In terms of assembly, homodimer. Cu cation serves as cofactor. It depends on Zn(2+) as a cofactor.

It is found in the cytoplasm. It catalyses the reaction 2 superoxide + 2 H(+) = H2O2 + O2. Its function is as follows. Destroys radicals which are normally produced within the cells and which are toxic to biological systems. The chain is Superoxide dismutase [Cu-Zn] from Bombyx mori (Silk moth).